Consider the following 330-residue polypeptide: Phosphate acyltransferase (330 aa).

This sequence belongs to the PlsX family. In terms of assembly, homodimer. Probably interacts with PlsY.

It localises to the cytoplasm. The catalysed reaction is a fatty acyl-[ACP] + phosphate = an acyl phosphate + holo-[ACP]. It functions in the pathway lipid metabolism; phospholipid metabolism. Functionally, catalyzes the reversible formation of acyl-phosphate (acyl-PO(4)) from acyl-[acyl-carrier-protein] (acyl-ACP). This enzyme utilizes acyl-ACP as fatty acyl donor, but not acyl-CoA. This Bacillus cereus (strain G9842) protein is Phosphate acyltransferase.